The chain runs to 220 residues: Adenylate kinase (220 aa).

10 to 15 (GAGKGT) is a binding site for ATP. Residues 30 to 59 (STGDMLRAAVKNCTPLGLKAKEIMDAGGLV) form an NMP region. Residues Thr31, Arg36, 57–59 (GLV), 85–88 (GFPR), and Gln92 each bind AMP. The tract at residues 126 to 163 (GRRTCPSCGKGFHVLFAPPRKAGVCDFCGADLVQRGDD) is LID. Residue Arg127 coordinates ATP. Zn(2+)-binding residues include Cys130, Cys133, Cys150, and Cys153. Residues Arg160 and Arg171 each contribute to the AMP site. Residue Leu199 coordinates ATP.

It belongs to the adenylate kinase family. As to quaternary structure, monomer.

The protein resides in the cytoplasm. It catalyses the reaction AMP + ATP = 2 ADP. It participates in purine metabolism; AMP biosynthesis via salvage pathway; AMP from ADP: step 1/1. Catalyzes the reversible transfer of the terminal phosphate group between ATP and AMP. Plays an important role in cellular energy homeostasis and in adenine nucleotide metabolism. This Pelobacter propionicus (strain DSM 2379 / NBRC 103807 / OttBd1) protein is Adenylate kinase.